A 198-amino-acid chain; its full sequence is RxLR effector protein Htp1 (198 aa).

The N-terminal stretch at 1–23 is a signal peptide; it reads MRIHHPLTLAALCVVLHESLGAA. Residues 46–49 carry the RxLR motif; the sequence is RHLR. 2 disordered regions span residues 48–101 and 115–198; these read LRSD…TPMK and TKNA…PTFD. Asn-70 carries N-linked (GlcNAc...) asparagine glycosylation. Polar residues predominate over residues 70-91; it reads NNSQEQATTGNSVETNQVPSTE. Positions 126 to 137 are enriched in acidic residues; sequence DDDDSDFSDDDV. Low complexity predominate over residues 173-191; it reads APTNAPTGTDAPTDAPTDA.

This sequence belongs to the RxLR effector family. In terms of assembly, interacts with the effector Htp3 within the host cells.

It is found in the secreted. The protein localises to the host cell. Its function is as follows. Effector involved in the disease saprolegniosis in salmonids and other freshwater fish, resulting in considerable economic losses in aquaculture. Within the host fish cells, Htp1 is involved in the uptake of the S.parasitica effector Htp3 at a neutral pH (pH 7.5) and its release from vesicles into host cytosol where it degrades nucleic acids. The chain is RxLR effector protein Htp1 from Saprolegnia parasitica (strain CBS 223.65).